The primary structure comprises 703 residues: MADRRRQRASQDTEDEESGASGSDSGGSPLRGGGSCSGSAGGGGSGSLPSQRGGRTGALHLRRVESGGAKSAEESECESEDGIEGDAVLSDYESAEDSEGEEGEYSEEENSKVELKSEANDAVNSSTKEEKGEEKPDTKSTVTGERQSGDGQESTEPVENKVGKKGPKHLDDDEDRKNPAYIPRKGLFFEHDLRGQTQEEEVRPKGRQRKLWKDEGRWEHDKFREDEQAPKSRQELIALYGYDIRSAHNPDDIKPRRIRKPRYGSPPQRDPNWNGERLNKSHRHQGLGGTLPPRTFINRNAAGTGRMSAPRNYSRSGGFKEGRAGFRPVEAGGQHGGRSGETVKHEISYRSRRLEQTSVRDPSPEADAPVLGSPEKEEAASEPPAAAPDAAPPPPDRPIEKKSYSRARRTRTKVGDAVKLAEEVPPPPEGLIPAPPVPETTPTPPTKTGTWEAPVDSSTSGLEQDVAQLNIAEQNWSPGQPSFLQPRELRGMPNHIHMGAGPPPQFNRMEEMGVQGGRAKRYSSQRQRPVPEPPAPPVHISIMEGHYYDPLQFQGPIYTHGDSPAPLPPQGMLVQPGMNLPHPGLHPHQTPAPLPNPGLYPPPVSMSPGQPPPQQLLAPTYFSAPGVMNFGNPSYPYAPGALPPPPPPHLYPNTQAPSQVYGGVTYYNPAQQQVQPKPSPPRRTPQPVTIKPPPPEVVSRGSS.

Residues 1–462 are disordered; sequence MADRRRQRAS…APVDSSTSGL (462 aa). Over residues 19–28 the composition is skewed to low complexity; it reads GASGSDSGGS. The span at 29 to 46 shows a compositional bias: gly residues; sequence PLRGGGSCSGSAGGGGSG. Residue Ser35 is modified to Phosphoserine. Composition is skewed to acidic residues over residues 74–84 and 93–108; these read ESECESEDGIE and ESAE…YSEE. The stretch at 95-131 forms a coiled coil; sequence AEDSEGEEGEYSEEENSKVELKSEANDAVNSSTKEEK. Basic and acidic residues-rich tracts occupy residues 109–119 and 127–138; these read ENSKVELKSEA and TKEEKGEEKPDT. Ser117 bears the Phosphoserine mark. A necessary for RNA-binding, interaction with MAGOH and localization in nucleus speckles region spans residues 137–283; it reads DTKSTVTGER…NGERLNKSHR (147 aa). The tract at residues 137-283 is sufficient to form the EJC; the sequence is DTKSTVTGER…NGERLNKSHR (147 aa). Polar residues predominate over residues 139 to 157; sequence KSTVTGERQSGDGQESTEP. The residue at position 148 (Ser148) is a Phosphoserine. The span at 158–178 shows a compositional bias: basic and acidic residues; the sequence is VENKVGKKGPKHLDDDEDRKN. A Nuclear localization signal 1 motif is present at residues 204 to 210; sequence PKGRQRK. Composition is skewed to basic and acidic residues over residues 211-234 and 245-255; these read LWKD…KSRQ and RSAHNPDDIKP. The Nuclear localization signal 2 motif lies at 254–262; that stretch reads KPRRIRKPR. Ser265 carries the phosphoserine modification. Over residues 341-355 the composition is skewed to basic and acidic residues; the sequence is ETVKHEISYRSRRLE. The residue at position 357 (Thr357) is a Phosphothreonine. 2 positions are modified to phosphoserine: Ser363 and Ser373. Residues 377–703 form a necessary for localization in cytoplasmic stress granules region; sequence EEAASEPPAA…PPEVVSRGSS (327 aa). A compositionally biased stretch (basic and acidic residues) spans 413–422; the sequence is KVGDAVKLAE. The span at 424–445 shows a compositional bias: pro residues; sequence VPPPPEGLIPAPPVPETTPTPP. Residues 462 to 466 carry the Nuclear export signal motif; it reads LEQDV. Position 477 is a phosphoserine (Ser477). Disordered regions lie at residues 492–538 and 633–703; these read MPNH…APPV and PSYP…RGSS. Pro residues-rich tracts occupy residues 641–650 and 677–696; these read ALPPPPPPHL and KPSP…PPPE.

This sequence belongs to the CASC3 family. In terms of assembly, identified in the spliceosome C complex. Component of the mRNA splicing-dependent exon junction complex (EJC), which contains at least CASC3, EIF4A3, MAGOH, NXF1 and RBM8A/Y14. Identified in a complex composed of the EJC core, UPF3B and UPF2. The EJC core can also interact with UPF3A (in vitro). Forms homooligomers. Interacts with STAU in an RNA-dependent manner. Interacts with DHX34; the interaction is RNA-independent. Post-translationally, ADP-ribosylated by tankyrase TNKS and TNKS2. Poly-ADP-ribosylated protein is recognized by RNF146, followed by ubiquitination. Ubiquitinated by RNF146 when poly-ADP-ribosylated, leading to its degradation. As to expression, widely expressed. Overexpressed in breast cancers and metastasis, as well as in gastric cancers.

Its subcellular location is the cytoplasm. The protein resides in the perinuclear region. It localises to the nucleus. It is found in the nucleus speckle. The protein localises to the stress granule. Its subcellular location is the cytoplasmic ribonucleoprotein granule. The protein resides in the cell projection. It localises to the dendrite. Required for pre-mRNA splicing as component of the spliceosome. Core component of the splicing-dependent multiprotein exon junction complex (EJC) deposited at splice junctions on mRNAs. The EJC is a dynamic structure consisting of core proteins and several peripheral nuclear and cytoplasmic associated factors that join the complex only transiently either during EJC assembly or during subsequent mRNA metabolism. The EJC marks the position of the exon-exon junction in the mature mRNA for the gene expression machinery and the core components remain bound to spliced mRNAs throughout all stages of mRNA metabolism thereby influencing downstream processes including nuclear mRNA export, subcellular mRNA localization, translation efficiency and nonsense-mediated mRNA decay (NMD). Stimulates the ATPase and RNA-helicase activities of EIF4A3. Plays a role in the stress response by participating in cytoplasmic stress granules assembly and by favoring cell recovery following stress. Component of the dendritic ribonucleoprotein particles (RNPs) in hippocampal neurons. May play a role in mRNA transport. Binds spliced mRNA in sequence-independent manner, 20-24 nucleotides upstream of mRNA exon-exon junctions. Binds poly(G) and poly(U) RNA homomer. The polypeptide is Protein CASC3 (CASC3) (Homo sapiens (Human)).